The sequence spans 80 residues: Large ribosomal subunit protein bL31B (80 aa).

This sequence belongs to the bacterial ribosomal protein bL31 family. Type B subfamily. As to quaternary structure, part of the 50S ribosomal subunit.

This Streptococcus pneumoniae serotype 2 (strain D39 / NCTC 7466) protein is Large ribosomal subunit protein bL31B.